The chain runs to 121 residues: uncharacterized protein (121 aa).

An HTH gntR-type domain is found at 9–77 (KPIYLQIADQ…RGQGTFIAEK (69 aa)). Positions 37–56 (VREMAIQTKVNPNTIQRTYS) form a DNA-binding region, H-T-H motif.

This is an uncharacterized protein from Bacillus subtilis (strain 168).